Here is a 224-residue protein sequence, read N- to C-terminus: V-type ATP synthase subunit D (224 aa).

A disordered region spans residues 190 to 224; it reads REAGYTQKKIKAKIEGKNKEAREAAAATSHGSAAD. Residues 201-212 are compositionally biased toward basic and acidic residues; sequence AKIEGKNKEARE. Low complexity predominate over residues 213 to 224; that stretch reads AAAATSHGSAAD.

It belongs to the V-ATPase D subunit family.

Functionally, produces ATP from ADP in the presence of a proton gradient across the membrane. The chain is V-type ATP synthase subunit D (atpD) from Deinococcus radiodurans (strain ATCC 13939 / DSM 20539 / JCM 16871 / CCUG 27074 / LMG 4051 / NBRC 15346 / NCIMB 9279 / VKM B-1422 / R1).